The sequence spans 217 residues: Glyoxalase ElbB (217 aa).

Catalysis depends on C135, which acts as the Nucleophile.

Belongs to the peptidase C56 family. In terms of assembly, homodimer.

It carries out the reaction glyoxal + H2O = glycolate + H(+). Its function is as follows. Displays glyoxalase activity, catalyzing the conversion of glyoxal to glycolate. However, this apparent glyoxalase activity may reflect a protein deglycase activity, which could be the primary function of this protein like other DJ-1 superfamily members such as PARK7, YajL, YhbO and HchA. Is not able to use methylglyoxal as substrate. This is Glyoxalase ElbB from Escherichia coli (strain K12).